Reading from the N-terminus, the 477-residue chain is MFKNVFSSLQKVGKSLMLPVSVLPIAGILLGIGSAHFTLIPEIISQIMAQTGGSIFSNMPLIFAIGVALGFSNNDGVAALAAVVAYSILIQTLSAVELNILNTDANTIKNKNFSDIGILGGIIAGAISAYMFNKFYKIQLPEYLGFFAGKRFVPIISGLFAIFVGLILSLIWPSIGNKIQIFSEWAAYQNPIIAFSLYGLVERALVPFGLHHIWNVPFQMQIGEYKNSIGQIFHGDIARYMAGDTTAGNLSGGFIFKMYGLPGAALAIWHTAKKENRKKIGSIMISAALTAFLTGITEPIEFSFILVAPILYIIHAILAGLSFPLCIFLNMRAGTSFSHGFIDFIVLSGHSHKIFLFPIVGICYGLLYYSIFYFLITTFNLKTPGREENKNTVFFRNNIEIAPYIVEALGGKNNIKNLDACITRLRITVSEISKVNEENLKNLGAAGVVISGSGVQAVFGTRSENIKTAIDEYINNI.

The PTS EIIC type-1 domain maps to 1–388 (MFKNVFSSLQ…FNLKTPGREE (388 aa)). 9 helical membrane passes run 20-40 (VSVL…FTLI), 51-71 (TGGS…ALGF), 76-96 (GVAA…LSAV), 112-132 (NFSD…AYMF), 152-172 (FVPI…SLIW), 250-270 (LSGG…AIWH), 280-300 (IGSI…TEPI), 304-324 (FILV…LSFP), and 354-374 (IFLF…IFYF). A PTS EIIB type-1 domain is found at 399–477 (IEIAPYIVEA…TAIDEYINNI (79 aa)). Cys-421 functions as the Phosphocysteine intermediate; for EIIB activity in the catalytic mechanism. Phosphocysteine is present on Cys-421.

Its subcellular location is the cell inner membrane. The catalysed reaction is N(pros)-phospho-L-histidyl-[protein] + D-glucose(out) = D-glucose 6-phosphate(in) + L-histidyl-[protein]. The phosphoenolpyruvate-dependent sugar phosphotransferase system (sugar PTS), a major carbohydrate active transport system, catalyzes the phosphorylation of incoming sugar substrates concomitantly with their translocation across the cell membrane. The enzyme II complex composed of PtsG and Crr is involved in glucose transport. In Buchnera aphidicola subsp. Schizaphis graminum (strain Sg), this protein is PTS system glucose-specific EIICB component (ptsG).